We begin with the raw amino-acid sequence, 243 residues long: Leucyl/phenylalanyl-tRNA--protein transferase (243 aa).

Residues 1–22 (MHSQPYLLSPTPNTPFPPAEHA) form a disordered region.

Belongs to the L/F-transferase family.

It localises to the cytoplasm. The enzyme catalyses N-terminal L-lysyl-[protein] + L-leucyl-tRNA(Leu) = N-terminal L-leucyl-L-lysyl-[protein] + tRNA(Leu) + H(+). It carries out the reaction N-terminal L-arginyl-[protein] + L-leucyl-tRNA(Leu) = N-terminal L-leucyl-L-arginyl-[protein] + tRNA(Leu) + H(+). It catalyses the reaction L-phenylalanyl-tRNA(Phe) + an N-terminal L-alpha-aminoacyl-[protein] = an N-terminal L-phenylalanyl-L-alpha-aminoacyl-[protein] + tRNA(Phe). Functions in the N-end rule pathway of protein degradation where it conjugates Leu, Phe and, less efficiently, Met from aminoacyl-tRNAs to the N-termini of proteins containing an N-terminal arginine or lysine. The polypeptide is Leucyl/phenylalanyl-tRNA--protein transferase (Xylella fastidiosa (strain M23)).